The chain runs to 737 residues: Glycogen [starch] synthase, muscle (737 aa).

A Phosphoserine; by AMPK and PKA modification is found at S8. Position 11 is a phosphoserine (S11). K39 serves as a coordination point for UDP. Positions 205 and 211 each coordinate UDP-alpha-D-glucose. Alpha-D-glucose 6-phosphate-binding residues include H291, E292, Q294, H297, and K301. Position 331 (R331) interacts with UDP. A UDP-alpha-D-glucose-binding site is contributed by R331. S412 carries the post-translational modification Phosphoserine. Residue H501 participates in alpha-D-glucose 6-phosphate binding. Positions 510, 512, and 513 each coordinate UDP-alpha-D-glucose. T515 provides a ligand contact to UDP. Alpha-D-glucose 6-phosphate contacts are provided by R582 and R586. Residues 634-737 (YRYPRPASVP…PTSSLGEERN (104 aa)) are disordered. Phosphoserine occurs at positions 641, 645, 649, and 652. Position 653 is a phosphoserine; by GSK3-alpha and GSK3-beta (S653). Phosphoserine; by CK2 is present on S657. The span at 658–681 (EDEEDPRNGPLEEDGERYDEDEEA) shows a compositional bias: acidic residues. Positions 682-695 (AKDRRNIRAPEWPR) are enriched in basic and acidic residues. At S698 the chain carries Phosphoserine. Over residues 698–714 (SCTSSTSGSKRNSVDTA) the composition is skewed to polar residues. T700 carries the phosphothreonine modification. Position 710 is a phosphoserine (S710). The span at 715–737 (TSSSLSTPSEPLSPTSSLGEERN) shows a compositional bias: low complexity. T721 carries the post-translational modification Phosphothreonine. 2 positions are modified to phosphoserine: S727 and S731.

It belongs to the glycosyltransferase 3 family. Part of the GYS1-GYG1 complex, a heterooctamer composed of a tetramer of GYS1 and 2 dimers of GYG1, where each GYS1 protomer binds to one GYG1 subunit (via GYG1 C-terminus); the GYS1 tetramer may dissociate from GYG1 dimers to continue glycogen polymerization on its own. In terms of processing, phosphorylation at Ser-8 by AMPK inactivates the enzyme activity. Primed phosphorylation at Ser-657 (site 5) by CSNK2A1 and CSNK2A2 is required for inhibitory phosphorylation at Ser-641 (site 3a), Ser-645 (site 3b), Ser-649 (site 3c) and Ser-653 (site 4) by GSK3A an GSK3B. Phosphorylated at Ser-641 by DYRK2, leading to inactivation. Phosphorylated at Ser-641 by PASK, leading to inactivation; phosphorylation by PASK is inhibited by glycogen. Dephosphorylation at Ser-641 and Ser-645 by PP1 activates the enzyme. In terms of tissue distribution, expressed in skeletal muscle and most other cell types where glycogen is present.

The catalysed reaction is [(1-&gt;4)-alpha-D-glucosyl](n) + UDP-alpha-D-glucose = [(1-&gt;4)-alpha-D-glucosyl](n+1) + UDP + H(+). It participates in glycan biosynthesis; glycogen biosynthesis. Allosteric activation by glucose-6-phosphate. Phosphorylation reduces enzyme activity by constraining a tense conformation of the tetramer through inter-subunit interaction. Phosphorylation reduces the activity towards UDP-glucose. When in the non-phosphorylated state, glycogen synthase does not require glucose-6-phosphate as an allosteric activator; when phosphorylated it does. In terms of biological role, glycogen synthase participates in the glycogen biosynthetic process along with glycogenin and glycogen branching enzyme. Extends the primer composed of a few glucose units formed by glycogenin by adding new glucose units to it. In this context, glycogen synthase transfers the glycosyl residue from UDP-Glc to the non-reducing end of alpha-1,4-glucan. The polypeptide is Glycogen [starch] synthase, muscle (Homo sapiens (Human)).